A 59-amino-acid chain; its full sequence is Small, acid-soluble spore protein C1 (59 aa).

Belongs to the alpha/beta-type SASP family. SASP are degraded in the first minutes of spore germination and provide amino acids for both new protein synthesis and metabolism.

SASP are bound to spore DNA. They are double-stranded DNA-binding proteins that cause DNA to change to an a-like conformation. They protect the DNA backbone from chemical and enzymatic cleavage and are thus involved in dormant spore's high resistance to UV light. This is Small, acid-soluble spore protein C1 (sspC1) from Clostridium perfringens (strain 13 / Type A).